The chain runs to 123 residues: Histone H2B 2 (123 aa).

The segment at 1 to 32 (MAPPKPSAKGAKKAAKTVTKPKDGKKRRHARK) is disordered. O-linked (GlcNAc) serine glycosylation occurs at Ser110. A Glycyl lysine isopeptide (Lys-Gly) (interchain with G-Cter in ubiquitin) cross-link involves residue Lys118.

The protein belongs to the histone H2B family. The nucleosome is a histone octamer containing two molecules each of H2A, H2B, H3 and H4 assembled in one H3-H4 heterotetramer and two H2A-H2B heterodimers. The octamer wraps approximately 147 bp of DNA. Post-translationally, monoubiquitination of Lys-118 gives a specific tag for epigenetic transcriptional activation and is also prerequisite for histone H3 'Lys-4' and 'Lys-79' methylation. In terms of processing, glcNAcylation at Ser-110 promotes monoubiquitination of Lys-118. It fluctuates in response to extracellular glucose, and associates with transcribed genes.

The protein localises to the nucleus. The protein resides in the chromosome. Functionally, core component of nucleosome. Nucleosomes wrap and compact DNA into chromatin, limiting DNA accessibility to the cellular machineries which require DNA as a template. Histones thereby play a central role in transcription regulation, DNA repair, DNA replication and chromosomal stability. DNA accessibility is regulated via a complex set of post-translational modifications of histones, also called histone code, and nucleosome remodeling. The chain is Histone H2B 2 (his-4) from Caenorhabditis elegans.